The sequence spans 87 residues: NADH dehydrogenase [ubiquinone] 1 alpha subcomplex subunit 4-like 2 (87 aa).

It belongs to the complex I NDUFA4 subunit family.

In Homo sapiens (Human), this protein is NADH dehydrogenase [ubiquinone] 1 alpha subcomplex subunit 4-like 2 (NDUFA4L2).